The primary structure comprises 690 residues: MAPFPDEVDVFTAPHWRMKQLVGRYCDKLSKTNFSNNNDFRALLQSLYATFKEFKMHEQIENEYIIGLLQQRSQTIYNVHSDNKLSEMLSLFEKGLKNVKNEYEQLNYAKQLKERLEAFTRDFLPHMKEEEEVFQPMLMEYFTYEELKDIKKKVIAQHCSQKDTAELLRGLSLWNQAEERQKVLKYSVDEKADTEAEVSEHSTGITHLPPEVMLSIFSYLNPQELCRCSQVSTKWSQLAKTGSLWKHLYPVHWARGDWYSGPATELDTEPDEEWVRNRKDESRAFQEWDEDADIDESEESAEESVAISIAQMEKRVLHGLIHNVLPYVGTSVKTLVLAYSSAVSSKMVRQILELCPNLEHLDLTQTDISDSAFDSWSWLGCCQSLRHLDLSGCEKITDMALEKISRALGVLTSHQSGFLKSAGKAASTPWTSKDITMPSTTQYACLHNLTDKGIGEEIDNEHSWTEPVSSESLTSPYVWMLDAEDLADIEDAVEWRHRNVESLCVMETASNFGCSSSGCYSKDIVGLRTSVCWQQHCASPAFAYCGHSFCCTGTALRTMTTLPATSAMCRKALRTTLPRGKDLIYFGSEKSDQETGRVLLFLSLSGCYQITDHGLRALTLGGGLPYLEHLNLSGCLTVTGAGLQDLVSACPSLNDEYFYYCDNINGPHADTASGCQNLQCGFRACCRSGE.

A hemerythrin-like region spans residues 1 to 159; it reads MAPFPDEVDV…IKKKVIAQHC (159 aa). The Fe(3+) site is built by His15, His57, Glu58, Glu61, His80, His126, and Glu130. The F-box domain occupies 202–248; it reads STGITHLPPEVMLSIFSYLNPQELCRCSQVSTKWSQLAKTGSLWKHL. LRR repeat units follow at residues 340–364, 365–392, 393–418, 478–507, 575–606, 607–634, and 635–660; these read SSAVSSKMVRQILELCPNLEHLDLT, QTDISDSAFDSWSWLGCCQSLRHLDLSG, CEKITDMALEKISRALGVLTSHQSGF, VWMLDAEDLADIEDAVEWRHRNVESLCVME, TTLPRGKDLIYFGSEKSDQETGRVLLFLSLSG, CYQITDHGLRALTLGGGLPYLEHLNLSG, and CLTVTGAGLQDLVSACPSLNDEYFYY. [2Fe-2S] cluster-binding residues include Cys661, Cys675, Cys685, and Cys686.

In terms of assembly, part of a SCF (SKP1-cullin-F-box) protein ligase complex. Interacts with ACO1/IRP1, IREB2/IRP2; the interaction depends on the [2Fe-2S] cluster. Interacts with DCTN1/p150-glued. [2Fe-2S] cluster is required as a cofactor. Polybiquitinated upon iron and oxygen depletion, leading to its degradation by the proteasome. Ubiquitination is regulated by the hemerythrin-like region that acts as an oxygen and iron sensor. Undergoes constitutive ubiquitin-dependent degradation at the steady state by HERC2. Ubiquitously expressed. Highly expressed in early embryogenesis with expression decreasing as the embryo progresses through development (E11 and E15).

The protein localises to the cytoplasm. The protein resides in the perinuclear region. Its subcellular location is the nucleus. It participates in protein modification; protein ubiquitination. With respect to regulation, an iron-sulfur cluster promotes IRP2 polyubiquitination and degradation in response to both iron and oxygen concentrations. Component of some SCF (SKP1-cullin-F-box) protein ligase complex that plays a central role in iron homeostasis by promoting the ubiquitination and subsequent degradation of IREB2/IRP2. The C-terminal domain of FBXL5 contains a redox-sensitive [2Fe-2S] cluster that, upon oxidation, promotes binding to IRP2 to effect its oxygen-dependent degradation. Under iron deficiency conditions, the N-terminal hemerythrin-like (Hr) region, which contains a diiron metal center, cannot bind iron and undergoes conformational changes that destabilize the FBXL5 protein and cause its ubiquitination and degradation. When intracellular iron levels start rising, the Hr region is stabilized. Additional increases in iron levels facilitate the assembly and incorporation of a redox active [2Fe-2S] cluster in the C-terminal domain. Only when oxygen level is high enough to maintain the cluster in its oxidized state can FBXL5 recruit IRP2 as a substrate for polyubiquination and degradation. Promotes ubiquitination and subsequent degradation of the dynactin complex component DCTN1. Within the nucleus, promotes the ubiquitination of SNAI1; preventing its interaction with DNA and promoting its degradation. Negatively regulates DNA damage response by mediating the ubiquitin-proteasome degradation of the DNA repair protein NABP2. The protein is F-box/LRR-repeat protein 5 (Fbxl5) of Mus musculus (Mouse).